Here is a 320-residue protein sequence, read N- to C-terminus: MACQNNLVVKQIIDLYDQISKLKSLKPSKNVDTLFGQLVSTCLPTDTNIDVTNMCEEVKDMRANLIKLCGEAEGYLEQHFSTILGSLQEDQNPLDHLHIFPYYSNYLKLGKLEFDLLSQHSSHVPTKIAFVGSGPMPLTSIVLAKFHLPNTTFHNFDIDSHANTLASNLVSRDPDLSKRMIFHTTDVLNATEGLDQYDVVFLAALVGMDKESKVKAIEHLEKHMAPGAVLMLRSAHALRAFLYPIVDSSDLKGFQLLTIYHPTDDVVNSVVIARKLGGPTTPGVNGTRGCMFMPCNCSKIHAIMNNRGKKNMIEEFSAIE.

It belongs to the nicotianamine synthase (NAS)-like family. In terms of tissue distribution, in shoots and roots.

It carries out the reaction 3 S-adenosyl-L-methionine = nicotianamine + 3 S-methyl-5'-thioadenosine + 3 H(+). Its function is as follows. Synthesizes nicotianamine, a polyamine which serves as a sensor for the physiological iron status within the plant, and/or might be involved in the transport of iron. In Arabidopsis thaliana (Mouse-ear cress), this protein is Nicotianamine synthase 1 (NAS1).